The primary structure comprises 838 residues: E3 ubiquitin-protein ligase RNF19A (838 aa).

Residues 41–61 (DRDLQSSASSVSLPSVKKAPK) are disordered. The span at 46-57 (SSASSVSLPSVK) shows a compositional bias: low complexity. Residues 128 to 351 (DFIECPLCLL…LSPSGCTFWG (224 aa)) are TRIAD supradomain. Positions 132, 135, 150, 152, 155, 158, 176, 179, 219, 224, 241, 246, 251, 254, 259, 264, 301, and 304 each coordinate Zn(2+). An RING-type 1 zinc finger spans residues 132–179 (CPLCLLRHSKDRFPDIMTCHHRSCVDCLRQYLRIEISESRVNISCPEC). An IBR-type zinc finger spans residues 199 to 264 (EKYEEFMLRR…KQIWHPNQTC (66 aa)). The RING-type 2; atypical zinc-finger motif lies at 301-332 (CPRCAAYIIKMNDGSCNHMTCAVCGCEFCWLC). Residue Cys-316 is part of the active site. Zn(2+) is bound by residues Cys-321, Cys-324, Cys-329, Cys-332, His-340, and Cys-347. A run of 2 helical transmembrane segments spans residues 368–388 (LVGAPVGIALIAGIAIPAMII) and 424–444 (VIVSPVVAAVTVGIGVPIMLA). Disordered regions lie at residues 622-685 (SKPS…GNMK) and 700-721 (QQSTNSSEFEAPSLSDSMPSVA). Polar residues predominate over residues 630-662 (NSGSSSVDDGSATRSHAGGSSSGLPEGKSSATK). The residue at position 631 (Ser-631) is a Phosphoserine. The interaction with CASR stretch occupies residues 660 to 838 (ATKWSKEATA…ELKVAIQTEI (179 aa)). Over residues 671–683 (KKSKSGKLRKKGN) the composition is skewed to basic residues. The segment covering 700 to 717 (QQSTNSSEFEAPSLSDSM) has biased composition (polar residues).

This sequence belongs to the RBR family. RNF19 subfamily. Interacts with UBE2L3 and UBE2L6. Interacts with transcription factor Sp1. Interacts with VCP, CASR, SNCAIP and with some SOD1 variants which cause amyotrophic lateral sclerosis, but not with wild-type SOD1. As to expression, widely expressed, with highest levels in heart. Ubiquitously expressed in the central nervous system.

Its subcellular location is the membrane. It localises to the cytoplasm. The protein localises to the cytoskeleton. It is found in the microtubule organizing center. The protein resides in the centrosome. The catalysed reaction is [E2 ubiquitin-conjugating enzyme]-S-ubiquitinyl-L-cysteine + [acceptor protein]-L-lysine = [E2 ubiquitin-conjugating enzyme]-L-cysteine + [acceptor protein]-N(6)-ubiquitinyl-L-lysine.. Its pathway is protein modification; protein ubiquitination. In terms of biological role, E3 ubiquitin-protein ligase which accepts ubiquitin from E2 ubiquitin-conjugating enzymes UBE2L3 and UBE2L6 in the form of a thioester and then directly transfers the ubiquitin to targeted substrates, such as SNCAIP or CASR. Specifically ubiquitinates pathogenic SOD1 variants, which leads to their proteasomal degradation and to neuronal protection. This is E3 ubiquitin-protein ligase RNF19A (RNF19A) from Homo sapiens (Human).